The chain runs to 210 residues: N-(5'-phosphoribosyl)anthranilate isomerase (210 aa).

This sequence belongs to the TrpF family.

It catalyses the reaction N-(5-phospho-beta-D-ribosyl)anthranilate = 1-(2-carboxyphenylamino)-1-deoxy-D-ribulose 5-phosphate. The protein operates within amino-acid biosynthesis; L-tryptophan biosynthesis; L-tryptophan from chorismate: step 3/5. The protein is N-(5'-phosphoribosyl)anthranilate isomerase (TRP1) of Eremothecium gossypii (strain ATCC 10895 / CBS 109.51 / FGSC 9923 / NRRL Y-1056) (Yeast).